Here is a 420-residue protein sequence, read N- to C-terminus: UDP-N-acetylglucosamine 1-carboxyvinyltransferase (420 aa).

A phosphoenolpyruvate-binding site is contributed by lysine 22–asparagine 23. UDP-N-acetyl-alpha-D-glucosamine is bound at residue arginine 91. Residue cysteine 115 is the Proton donor of the active site. 2-(S-cysteinyl)pyruvic acid O-phosphothioketal is present on cysteine 115. UDP-N-acetyl-alpha-D-glucosamine-binding positions include arginine 120–leucine 124, lysine 160–valine 163, aspartate 305, and isoleucine 327.

The protein belongs to the EPSP synthase family. MurA subfamily.

Its subcellular location is the cytoplasm. It carries out the reaction phosphoenolpyruvate + UDP-N-acetyl-alpha-D-glucosamine = UDP-N-acetyl-3-O-(1-carboxyvinyl)-alpha-D-glucosamine + phosphate. The protein operates within cell wall biogenesis; peptidoglycan biosynthesis. Cell wall formation. Adds enolpyruvyl to UDP-N-acetylglucosamine. The protein is UDP-N-acetylglucosamine 1-carboxyvinyltransferase of Erwinia tasmaniensis (strain DSM 17950 / CFBP 7177 / CIP 109463 / NCPPB 4357 / Et1/99).